The chain runs to 637 residues: 1-deoxy-D-xylulose-5-phosphate synthase (637 aa).

Residues histidine 76 and 117–119 (GHS) contribute to the thiamine diphosphate site. Aspartate 148 serves as a coordination point for Mg(2+). Thiamine diphosphate-binding positions include 149 to 150 (GA), asparagine 177, tyrosine 294, and glutamate 381. Asparagine 177 lines the Mg(2+) pocket.

This sequence belongs to the transketolase family. DXPS subfamily. In terms of assembly, homodimer. Requires Mg(2+) as cofactor. Thiamine diphosphate serves as cofactor.

The catalysed reaction is D-glyceraldehyde 3-phosphate + pyruvate + H(+) = 1-deoxy-D-xylulose 5-phosphate + CO2. Its pathway is metabolic intermediate biosynthesis; 1-deoxy-D-xylulose 5-phosphate biosynthesis; 1-deoxy-D-xylulose 5-phosphate from D-glyceraldehyde 3-phosphate and pyruvate: step 1/1. Catalyzes the acyloin condensation reaction between C atoms 2 and 3 of pyruvate and glyceraldehyde 3-phosphate to yield 1-deoxy-D-xylulose-5-phosphate (DXP). The polypeptide is 1-deoxy-D-xylulose-5-phosphate synthase (Neisseria meningitidis serogroup A / serotype 4A (strain DSM 15465 / Z2491)).